A 141-amino-acid polypeptide reads, in one-letter code: Nucleoside diphosphate kinase (141 aa).

The ATP site is built by Lys11, Phe59, Arg87, Thr93, Arg104, and Asn114. Residue His117 is the Pros-phosphohistidine intermediate of the active site.

This sequence belongs to the NDK family. Homotetramer. Mg(2+) is required as a cofactor.

Its subcellular location is the cytoplasm. It carries out the reaction a 2'-deoxyribonucleoside 5'-diphosphate + ATP = a 2'-deoxyribonucleoside 5'-triphosphate + ADP. The catalysed reaction is a ribonucleoside 5'-diphosphate + ATP = a ribonucleoside 5'-triphosphate + ADP. In terms of biological role, major role in the synthesis of nucleoside triphosphates other than ATP. The ATP gamma phosphate is transferred to the NDP beta phosphate via a ping-pong mechanism, using a phosphorylated active-site intermediate. This Janthinobacterium sp. (strain Marseille) (Minibacterium massiliensis) protein is Nucleoside diphosphate kinase.